Consider the following 217-residue polypeptide: 3,4-dihydroxy-2-butanone 4-phosphate synthase (217 aa).

D-ribulose 5-phosphate-binding positions include 37 to 38, D42, 150 to 154, and E174; these read RE and RGGHT. E38 is a Mg(2+) binding site. H153 serves as a coordination point for Mg(2+).

The protein belongs to the DHBP synthase family. Homodimer. Mg(2+) is required as a cofactor. Mn(2+) serves as cofactor.

The catalysed reaction is D-ribulose 5-phosphate = (2S)-2-hydroxy-3-oxobutyl phosphate + formate + H(+). It functions in the pathway cofactor biosynthesis; riboflavin biosynthesis; 2-hydroxy-3-oxobutyl phosphate from D-ribulose 5-phosphate: step 1/1. Its function is as follows. Catalyzes the conversion of D-ribulose 5-phosphate to formate and 3,4-dihydroxy-2-butanone 4-phosphate. The sequence is that of 3,4-dihydroxy-2-butanone 4-phosphate synthase from Escherichia coli O127:H6 (strain E2348/69 / EPEC).